A 473-amino-acid chain; its full sequence is Ribulose bisphosphate carboxylase large chain (473 aa).

Substrate contacts are provided by N116 and T166. K168 functions as the Proton acceptor in the catalytic mechanism. K170 lines the substrate pocket. 3 residues coordinate Mg(2+): K194, D196, and E197. K194 is subject to N6-carboxylysine. H287 functions as the Proton acceptor in the catalytic mechanism. 3 residues coordinate substrate: R288, H320, and S372.

It belongs to the RuBisCO large chain family. Type I subfamily. Heterohexadecamer of 8 large chains and 8 small chains. The cofactor is Mg(2+).

It catalyses the reaction 2 (2R)-3-phosphoglycerate + 2 H(+) = D-ribulose 1,5-bisphosphate + CO2 + H2O. The catalysed reaction is D-ribulose 1,5-bisphosphate + O2 = 2-phosphoglycolate + (2R)-3-phosphoglycerate + 2 H(+). Functionally, ruBisCO catalyzes two reactions: the carboxylation of D-ribulose 1,5-bisphosphate, the primary event in carbon dioxide fixation, as well as the oxidative fragmentation of the pentose substrate. Both reactions occur simultaneously and in competition at the same active site. In Nitrosospira sp. (strain TCH716), this protein is Ribulose bisphosphate carboxylase large chain.